A 351-amino-acid polypeptide reads, in one-letter code: Holliday junction branch migration complex subunit RuvB (351 aa).

Residues 1-189 (MTAHDADWSD…FGFTAHMDFY (189 aa)) are large ATPase domain (RuvB-L). ATP-binding positions include leucine 28, arginine 29, glycine 70, lysine 73, threonine 74, serine 75, 136–138 (EDF), arginine 179, tyrosine 189, and arginine 226. A Mg(2+)-binding site is contributed by threonine 74. Residues 190–260 (EPAELQQVLA…VAKAALAVYD (71 aa)) are small ATPAse domain (RuvB-S). Residues 263 to 351 (ELGLDRLDRA…AGLGQPGLFD (89 aa)) are head domain (RuvB-H). Positions 318 and 323 each coordinate DNA.

It belongs to the RuvB family. In terms of assembly, homohexamer. Forms an RuvA(8)-RuvB(12)-Holliday junction (HJ) complex. HJ DNA is sandwiched between 2 RuvA tetramers; dsDNA enters through RuvA and exits via RuvB. An RuvB hexamer assembles on each DNA strand where it exits the tetramer. Each RuvB hexamer is contacted by two RuvA subunits (via domain III) on 2 adjacent RuvB subunits; this complex drives branch migration. In the full resolvosome a probable DNA-RuvA(4)-RuvB(12)-RuvC(2) complex forms which resolves the HJ.

It localises to the cytoplasm. The enzyme catalyses ATP + H2O = ADP + phosphate + H(+). The RuvA-RuvB-RuvC complex processes Holliday junction (HJ) DNA during genetic recombination and DNA repair, while the RuvA-RuvB complex plays an important role in the rescue of blocked DNA replication forks via replication fork reversal (RFR). RuvA specifically binds to HJ cruciform DNA, conferring on it an open structure. The RuvB hexamer acts as an ATP-dependent pump, pulling dsDNA into and through the RuvAB complex. RuvB forms 2 homohexamers on either side of HJ DNA bound by 1 or 2 RuvA tetramers; 4 subunits per hexamer contact DNA at a time. Coordinated motions by a converter formed by DNA-disengaged RuvB subunits stimulates ATP hydrolysis and nucleotide exchange. Immobilization of the converter enables RuvB to convert the ATP-contained energy into a lever motion, pulling 2 nucleotides of DNA out of the RuvA tetramer per ATP hydrolyzed, thus driving DNA branch migration. The RuvB motors rotate together with the DNA substrate, which together with the progressing nucleotide cycle form the mechanistic basis for DNA recombination by continuous HJ branch migration. Branch migration allows RuvC to scan DNA until it finds its consensus sequence, where it cleaves and resolves cruciform DNA. In Mycobacterium avium (strain 104), this protein is Holliday junction branch migration complex subunit RuvB.